Reading from the N-terminus, the 872-residue chain is Tegument protein UL47 homolog (872 aa).

Positions 1-206 are disordered; the sequence is MDQHHGVRGG…ENDTEVISDD (206 aa). The Nuclear localization signal signature appears at 13-33; that stretch reads IRRPRRSIETRSHPFRAAGNT. The segment covering 31-41 has biased composition (polar residues); that stretch reads GNTQRTYSTPR. 2 stretches are compositionally biased toward low complexity: residues 66-80 and 91-101; these read ESST…PSTS and DDAPAQPQAPR. 2 stretches are compositionally biased toward acidic residues: residues 110 to 134 and 177 to 204; these read PEED…EEDQ and AEEE…EVIS.

Belongs to the alphaherpesvirinae HHV-1 UL47 family. As to quaternary structure, interacts with US3 kinase. Interacts with UL31 and UL34; these interactions seem important for efficient virion nuclear egress. Interacts with UL41/VHS. Post-translationally, phosphorylated by US3. This phosphorylation is required for proper nuclear localization. In terms of processing, O-glycosylated.

Its subcellular location is the virion tegument. The protein localises to the host nucleus. The protein resides in the host cytoplasm. Tegument protein that can bind to various RNA transcripts. Plays a role in the attenuation of selective viral and cellular mRNA degradation by modulating the activity of host shutoff RNase UL41/VHS. Also plays a role in the primary envelopment of virions in the perinuclear space, probably by interacting with two nuclear egress proteins UL31 and UL34. This is Tegument protein UL47 homolog (13) from Equus caballus (Horse).